Consider the following 179-residue polypeptide: 3-hydroxyanthranilate 3,4-dioxygenase 2 (179 aa).

Arg-44 serves as a coordination point for O2. Fe cation contacts are provided by His-48, Glu-60, and His-99. A substrate-binding site is contributed by Glu-60. 2 residues coordinate substrate: Arg-103 and Glu-113.

Belongs to the 3-HAO family. Requires Fe(2+) as cofactor.

The protein localises to the cytoplasm. The enzyme catalyses 3-hydroxyanthranilate + O2 = (2Z,4Z)-2-amino-3-carboxymuconate 6-semialdehyde. The protein operates within cofactor biosynthesis; NAD(+) biosynthesis; quinolinate from L-kynurenine: step 3/3. In terms of biological role, catalyzes the oxidative ring opening of 3-hydroxyanthranilate to 2-amino-3-carboxymuconate semialdehyde, which spontaneously cyclizes to quinolinate. This is 3-hydroxyanthranilate 3,4-dioxygenase 2 (bna1-2) from Aspergillus oryzae (strain ATCC 42149 / RIB 40) (Yellow koji mold).